Here is a 146-residue protein sequence, read N- to C-terminus: Large ribosomal subunit protein uL15 (146 aa).

A compositionally biased stretch (basic and acidic residues) spans 1–13 (MKLHELHSAEGSR). The disordered stretch occupies residues 1 to 55 (MKLHELHSAEGSRRNRKRVGRGTSSGYGKTSGRGQKGQLARQGGHTRLGFEGGQM). Positions 23–35 (TSSGYGKTSGRGQ) are enriched in gly residues.

This sequence belongs to the universal ribosomal protein uL15 family. In terms of assembly, part of the 50S ribosomal subunit.

Its function is as follows. Binds to the 23S rRNA. This Lactobacillus acidophilus (strain ATCC 700396 / NCK56 / N2 / NCFM) protein is Large ribosomal subunit protein uL15.